The primary structure comprises 255 residues: 5'-nucleotidase SurE (255 aa).

D8, D9, S40, and N95 together coordinate a divalent metal cation.

Belongs to the SurE nucleotidase family. A divalent metal cation serves as cofactor.

The protein localises to the cytoplasm. The catalysed reaction is a ribonucleoside 5'-phosphate + H2O = a ribonucleoside + phosphate. Functionally, nucleotidase that shows phosphatase activity on nucleoside 5'-monophosphates. The chain is 5'-nucleotidase SurE from Solidesulfovibrio magneticus (strain ATCC 700980 / DSM 13731 / RS-1) (Desulfovibrio magneticus).